A 539-amino-acid chain; its full sequence is Protein Wnt-4 (539 aa).

Positions 1–21 (MPSPTGVFVLMILTHLSFGLG) are cleaved as a signal peptide. The disordered stretch occupies residues 34–77 (QNGDLDSSNPAIHHQQHQQHQQHQQHQQHQSNHNLNNGNMNSTI). The segment covering 51–74 (QQHQQHQQHQQHQSNHNLNNGNMN) has biased composition (low complexity). Asn-74 and Asn-284 each carry an N-linked (GlcNAc...) asparagine glycan. Cystine bridges form between Cys-274/Cys-285, Cys-322/Cys-330, Cys-332/Cys-349, Cys-397/Cys-411, and Cys-399/Cys-406. Ser-403 is lipidated: O-palmitoleoyl serine; by PORCN. An N-linked (GlcNAc...) asparagine glycan is attached at Asn-419. The tract at residues 436–463 (APNQRSMRQVSSSRMKKPKQRRKKPQQS) is disordered. Positions 439–448 (QRSMRQVSSS) are enriched in low complexity. Residues 449–460 (RMKKPKQRRKKP) show a composition bias toward basic residues. Disulfide bonds link Cys-478–Cys-497, Cys-486–Cys-492, Cys-496–Cys-538, Cys-512–Cys-529, Cys-514–Cys-526, and Cys-521–Cys-522.

Belongs to the Wnt family. In terms of processing, palmitoleoylated by porcupine. The lipid group functions as a sorting signal, targeting the ligand to polarized vesicles that transport Wnt4 to unique sites at the cell surface. Depalmitoleoylated by notum, leading to inhibit Wnt signaling pathway.

It localises to the secreted. It is found in the extracellular space. The protein resides in the extracellular matrix. Functionally, binds as a ligand to a family of frizzled seven-transmembrane receptors and acts through a cascade of genes on the nucleus. Acts downstream of homeotic complex genes in the visceral mesoderm and is required for embryonic segmentation. Also required for cell movement and FAK regulation during ovarian morphogenesis. This is Protein Wnt-4 (Wnt4) from Drosophila melanogaster (Fruit fly).